The chain runs to 452 residues: Plasmepsin I (452 aa).

Residues 1 to 37 (MALSIKEDFSSAFAKNESAVNSSTFNNNMKTWKIQKR) lie on the Cytoplasmic side of the membrane. Positions 1–123 (MALSIKEDFS…TGLTQKPHLG (123 aa)) are excised as a propeptide. The chain crosses the membrane as a helical; Signal-anchor for type II membrane protein span at residues 38-58 (FQILYVFFFLLITGALFYYLI). The Lumenal segment spans residues 59–452 (DNVLFPKNKK…VGFALAKKKL (394 aa)). The 308-residue stretch at 139 to 446 (YYGEAQIGDN…DYDNHTVGFA (308 aa)) folds into the Peptidase A1 domain. Aspartate 157 is an active-site residue. The cysteines at positions 170 and 175 are disulfide-linked. The active site involves aspartate 337. A disulfide bond links cysteine 372 and cysteine 408.

It belongs to the peptidase A1 family. Not N-glycosylated. In terms of processing, proteolytically cleaved into the soluble active mature form in the digestive vacuole by cysteine protease falcipains; the process begins at the early ring stage. Proteolysis requires an acidic environment.

The protein localises to the membrane. It localises to the vacuole lumen. The protein resides in the vacuole membrane. It catalyses the reaction Hydrolysis of the 33-Phe-|-Leu-34 bond in the alpha-chain of hemoglobin, leading to denaturation of molecule.. With respect to regulation, inhibited by KNI derived compounds KNI-10333 and to a lesser extent KNI-10743. During the asexual blood stage, catalyzes the initial cleavage of native host hemoglobin (Hb) resulting in Hb denaturation; specifically cleaves between Phe-33 and Leu-34 of Hb alpha-chain. Digestion of host Hb is an essential step which provides the parasite with amino acids for protein synthesis, and regulates osmolarity. The polypeptide is Plasmepsin I (Plasmodium falciparum (isolate 3D7)).